The sequence spans 255 residues: Hemin import ATP-binding protein HmuV (255 aa).

In terms of domain architecture, ABC transporter spans 2–238 (LRVENLHVRR…EPLKAVFGLE (237 aa)). An ATP-binding site is contributed by 34–41 (GPNGAGKS).

It belongs to the ABC transporter superfamily. Heme (hemin) importer (TC 3.A.1.14.5) family. As to quaternary structure, the complex is composed of two ATP-binding proteins (HmuV), two transmembrane proteins (HmuU) and a solute-binding protein (HmuT).

The protein localises to the cell inner membrane. Part of the ABC transporter complex HmuTUV involved in hemin import. Responsible for energy coupling to the transport system. The chain is Hemin import ATP-binding protein HmuV from Pseudomonas fluorescens (strain ATCC BAA-477 / NRRL B-23932 / Pf-5).